A 189-amino-acid chain; its full sequence is Interferon alpha-6 (189 aa).

Residues 1–23 (MARLCAFLMVLAVLSYWPTCSLG) form the signal peptide. 2 cysteine pairs are disulfide-bonded: cysteine 24–cysteine 122 and cysteine 52–cysteine 162. Residue asparagine 101 is glycosylated (N-linked (GlcNAc...) asparagine).

It belongs to the alpha/beta interferon family.

The protein localises to the secreted. Functionally, produced by macrophages, IFN-alpha have antiviral activities. Interferon stimulates the production of two enzymes: a protein kinase and an oligoadenylate synthetase. In Mus musculus (Mouse), this protein is Interferon alpha-6 (Ifna6).